Here is a 919-residue protein sequence, read N- to C-terminus: TRPM8 channel-associated factor 2 (919 aa).

One can recognise a Peptidase M60 domain in the interval 543–842; that stretch reads DVWMSTGLYL…TYLQLQEVFG (300 aa).

This sequence belongs to the TCAF family. As to quaternary structure, interacts with TRPM8 (via N-terminus and C-terminus domains); the interaction inhibits TRPM8 channel activity. Interacts with TRPV6.

It localises to the cell membrane. Its function is as follows. Negatively regulates the plasma membrane cation channel TRPM8 activity. Involved in the recruitment of TRPM8 to the cell surface. Promotes prostate cancer cell migration stimulation in a TRPM8-dependent manner. The polypeptide is TRPM8 channel-associated factor 2 (Mus musculus (Mouse)).